The primary structure comprises 339 residues: Probable cytosolic iron-sulfur protein assembly protein CIAO1 (339 aa).

WD repeat units lie at residues 14-53 (HPDSRCWFLAWNPSGTLLASCGGDRKIRIWGTEGDSWICK), 59-98 (GHQRTVRKVAWSPCGNYLASASFDATTCIWKKNQDDFECV), 103-142 (GHENEVKSVAWAPSGNLLATCSRDKSVWVWEVDEEDEYEC), 148-187 (SHTQDVKHVVWHPSQELLASASYDDTVKLYQEEGDDWVCC), 192-231 (GHESTVWSIAFDPSGQRLASCSDDRTVRIWRQYLPGNEQG), 250-289 (FHTRTIYDVAWCQLTGALATACGDDAIRVFEEDPGSDPQQ), and 301-339 (AHSQDVNCVAWNPKEPGLLASCSDDGEVAFWEYHQPAGL). Positions 176 to 178 (LYQ) match the LYR motif; required for interaction with HSC20 motif.

It belongs to the WD repeat CIA1 family. Component of the CIA complex. Interacts with CIAO2A and forms a complex with CIAO2B and MMS19; the interactions with CIAO2A and CIAO2B are mutually exclusive. Interacts with CHD1L, ERCC2, IREB2 and POLD1. Component of the MMXD complex, which includes CIAO1, ERCC2, CIAO2B, MMS19 and SLC25A5. Interacts with WT1. Interacts with CIAO3. Interacts (via LYR motif) with HSC20.

The protein localises to the cytoplasm. Functionally, key component of the cytosolic iron-sulfur protein assembly (CIA) complex, a multiprotein complex that mediates the incorporation of iron-sulfur cluster into extramitochondrial Fe/S proteins. As a CIA complex component, interacts specifically with CIAO2A or CIAO2B and MMS19 to assist different branches of iron-sulfur protein assembly, depending of its interactors. The complex CIAO1:CIAO2B:MMS19 binds to and facilitates the assembly of most cytosolic-nuclear Fe/S proteins. CIAO1:CIAO2A specifically matures ACO1 and stabilizes IREB2. Seems to specifically modulate the transactivation activity of WT1. As part of the mitotic spindle-associated MMXD complex it may play a role in chromosome segregation. The chain is Probable cytosolic iron-sulfur protein assembly protein CIAO1 from Mus musculus (Mouse).